A 469-amino-acid chain; its full sequence is 1-aminocyclopropane-1-carboxylate synthase 8 (469 aa).

Substrate is bound by residues Glu-47 and Tyr-85. Lys-272 bears the N6-(pyridoxal phosphate)lysine mark.

The protein belongs to the class-I pyridoxal-phosphate-dependent aminotransferase family. As to quaternary structure, homodimer and heterodimer. In vivo, the relevance of heterodimerization with other ACS enzymes is however unsure. Interacts with GRF3. The cofactor is pyridoxal 5'-phosphate. In terms of processing, may be processed at its C-terminus. Expressed in roots. Expressed at low level in flowers and siliques.

It catalyses the reaction S-adenosyl-L-methionine = 1-aminocyclopropane-1-carboxylate + S-methyl-5'-thioadenosine + H(+). Its pathway is alkene biosynthesis; ethylene biosynthesis via S-adenosyl-L-methionine; ethylene from S-adenosyl-L-methionine: step 1/2. Functionally, 1-aminocyclopropane-1-carboxylate synthase (ACS) enzymes catalyze the conversion of S-adenosyl-L-methionine (SAM) into 1-aminocyclopropane-1-carboxylate (ACC), a direct precursor of ethylene. This chain is 1-aminocyclopropane-1-carboxylate synthase 8 (ACS8), found in Arabidopsis thaliana (Mouse-ear cress).